A 625-amino-acid chain; its full sequence is Inactive glucose-6-phosphate 1-dehydrogenase 4, chloroplastic (625 aa).

Residues 1–49 (MSLSSCLLPFSQSATAPSSSVCSCHLAASFSNFPVSSRDYSFSRSGSLV) constitute a chloroplast transit peptide. Residues 160–167 (GATGELAR) and Arg194 contribute to the NADP(+) site. An intrachain disulfide couples Cys212 to Cys220. Lys297 provides a ligand contact to NADP(+). D-glucose 6-phosphate is bound by residues Lys297, 327 to 331 (HMLGR), Glu365, and Asp382. His387 functions as the Proton acceptor in the catalytic mechanism. NADP(+) contacts are provided by Arg471, Arg480, Arg513, and Arg606.

It belongs to the glucose-6-phosphate dehydrogenase family. In terms of assembly, forms homodimer. Interacts with G6PD1. Expressed in leaves, stems and buds.

The protein localises to the plastid. It is found in the chloroplast stroma. In terms of biological role, seems to be a catalytically inactive enzyme. The polypeptide is Inactive glucose-6-phosphate 1-dehydrogenase 4, chloroplastic (Arabidopsis thaliana (Mouse-ear cress)).